The chain runs to 871 residues: Metabotropic glutamate receptor 6 (871 aa).

Positions 1-23 (MGRLPVLLLWLAWWLSQAGIACG) are cleaved as a signal peptide. Residues 24–579 (AGSVRLAGGL…VVRLTWSSPW (556 aa)) lie on the Extracellular side of the membrane. Cysteine 51 and cysteine 93 are disulfide-bonded. Residues serine 148, 169–171 (AST), and tyrosine 219 contribute to the L-glutamate site. Cystine bridges form between cysteine 238-cysteine 530, cysteine 361-cysteine 377, cysteine 417-cysteine 424, cysteine 512-cysteine 531, cysteine 516-cysteine 534, cysteine 537-cysteine 549, and cysteine 552-cysteine 565. A glycan (N-linked (GlcNAc...) asparagine) is linked at asparagine 290. Position 301 (aspartate 301) interacts with L-glutamate. Lysine 394 serves as a coordination point for L-glutamate. Residues asparagine 445 and asparagine 473 are each glycosylated (N-linked (GlcNAc...) asparagine). N-linked (GlcNAc...) asparagine glycosylation occurs at asparagine 561. A helical membrane pass occupies residues 580 to 602 (AALPLLLAVLGIMATTTIMATFM). The Cytoplasmic segment spans residues 603–616 (RHNDTPIVRASGRE). The chain crosses the membrane as a helical span at residues 617–637 (LSYVLLTGIFLIYAITFLMVA). The Extracellular segment spans residues 638-648 (EPCAAICAARR). The chain crosses the membrane as a helical span at residues 649 to 667 (LLLGLGTTLSYSALLTKTN). Topologically, residues 668-691 (RIYRIFEQGKRSVTPPPFISPTSQ) are cytoplasmic. Residues 692–712 (LVITFGLTSLQVVGVIAWLGA) form a helical membrane-spanning segment. Residues 713–742 (QPPHSVIDYEEQRTVDPEQARGVLKCDMSD) are Extracellular-facing. Residues 743–764 (LSLIGCLGYSLLLMVTCTVYAI) form a helical membrane-spanning segment. At 765–777 (KARGVPETFNEAK) the chain is on the cytoplasmic side. Residues 778–800 (PIGFTMYTTCIIWLAFVPIFFGT) traverse the membrane as a helical segment. Over 801–813 (AQSAEKIYIQTTT) the chain is Extracellular. Residues 814 to 839 (LTVSLSLSASVSLGMLYVPKTYVILF) traverse the membrane as a helical segment. Over 840-871 (HPEQNVQKRKRSLKKTSTMAAPPQNENAEDAK) the chain is Cytoplasmic. Positions 850-871 (RSLKKTSTMAAPPQNENAEDAK) are disordered.

Belongs to the G-protein coupled receptor 3 family. In terms of assembly, homodimer. Interacts with GPR179. Interacts with photoreceptor synaptic protein LRIT1 (via its N-terminal extracellular domain). As to expression, restricted expression in the inner nuclear layer of the retina.

It is found in the cell membrane. The protein localises to the endoplasmic reticulum membrane. The protein resides in the golgi apparatus membrane. Its subcellular location is the cell projection. It localises to the dendrite. G-protein coupled receptor for glutamate. Ligand binding causes a conformation change that triggers signaling via guanine nucleotide-binding proteins (G proteins) and modulates the activity of down-stream effectors, such as adenylate cyclase. Signaling inhibits adenylate cyclase activity. Signaling stimulates TRPM1 channel activity and Ca(2+) uptake. Required for normal vision. The polypeptide is Metabotropic glutamate receptor 6 (Grm6) (Rattus norvegicus (Rat)).